The primary structure comprises 309 residues: Protease HtpX homolog (309 aa).

Helical transmembrane passes span 7–27 and 28–48; these read FILL…IGGP and TGML…YWNA. His-134 contacts Zn(2+). Glu-135 is an active-site residue. A Zn(2+)-binding site is contributed by His-138. The next 2 helical transmembrane spans lie at 149 to 169 and 177 to 197; these read VTAT…FFGG and PGGL…AMLV. Glu-206 lines the Zn(2+) pocket. The interval 289-309 is disordered; the sequence is TRGRSGTAVPTGATGKSGPWG.

The protein belongs to the peptidase M48B family. The cofactor is Zn(2+).

The protein localises to the cell inner membrane. The polypeptide is Protease HtpX homolog (Caulobacter sp. (strain K31)).